Here is a 525-residue protein sequence, read N- to C-terminus: Allantoate deiminase (525 aa).

Residues 1–53 (MAVPHPSSSSSRSHPFLSHVYHTSFHHHHHHNHPSLVLFWCLVFSLLSPLALS) form the signal peptide. Positions 56–75 (SSSSSSSSDSSSSSSSHISL) are enriched in low complexity. A disordered region spans residues 56 to 78 (SSSSSSSSDSSSSSSSHISLGIG). The N-linked (GlcNAc...) asparagine glycan is linked to Asn156. 5 residues coordinate Mn(2+): His167, Asp178, Glu215, His281, and His499.

This sequence belongs to the peptidase M20A family. As to quaternary structure, homodimer. Requires Mn(2+) as cofactor. Expressed in seedlings, roots, stems, leaves, flowers, siliques and seeds.

The protein localises to the endoplasmic reticulum. It carries out the reaction allantoate + H2O + 2 H(+) = (S)-2-ureidoglycine + NH4(+) + CO2. With respect to regulation, inhibited by borate, fluoride, L-Asn and L-Asp, but not by phenylphosphorodiamidate. Its function is as follows. Involved in the catabolism of purine nucleotides. Can use allantoate as substrate, but not Nalpha-carbamoyl-L-Asp, Nalpha-carbamoyl-L-Ala or Nalpha-carbamoyl-Gly. The sequential activity of AAH, UGLYAH and UAH allows a complete purine breakdown without the intermediate generation of urea. Involved in the regulation of seed maturation and seed dormancy. The sequence is that of Allantoate deiminase from Arabidopsis thaliana (Mouse-ear cress).